A 1213-amino-acid polypeptide reads, in one-letter code: uncharacterized protein (1213 aa).

The 102-residue stretch at 289–390 folds into the PH domain; that stretch reads ATKRQGWLLR…WGSVINNARE (102 aa). The VASt domain maps to 776–945; the sequence is LDDIVFDRVY…EVNFLEKATR (170 aa). A run of 2 helical transmembrane segments spans residues 996 to 1016 and 1025 to 1045; these read LFLQGLAIDLLKLPWAVFHIF and FLVIIFACSVILNLSLMFCFG.

Its subcellular location is the cytoplasm. The protein localises to the nucleus membrane. It is found in the cytoskeleton. The protein resides in the microtubule organizing center. It localises to the spindle pole body. This is an uncharacterized protein from Schizosaccharomyces pombe (strain 972 / ATCC 24843) (Fission yeast).